Here is a 1054-residue protein sequence, read N- to C-terminus: Desmoglein-1 (1054 aa).

The signal sequence occupies residues methionine 1 to serine 23. Residues glutamate 24–arginine 49 constitute a propeptide that is removed on maturation. Residues asparagine 36, asparagine 110, and asparagine 180 are each glycosylated (N-linked (GlcNAc...) asparagine). Cadherin domains follow at residues glutamate 50–phenylalanine 157, serine 158–methionine 269, glutamate 270–serine 389, and arginine 386–glutamate 493. The Extracellular portion of the chain corresponds to glutamate 50–proline 566. The segment at glycine 487–glycine 554 is disordered. Over residues threonine 496–aspartate 507 the composition is skewed to low complexity. Residues serine 508–arginine 517 are compositionally biased toward gly residues. A compositionally biased stretch (low complexity) spans glycine 523 to serine 534. The segment covering threonine 542 to glycine 554 has biased composition (polar residues). Residue asparagine 557 is glycosylated (N-linked (GlcNAc...) asparagine). Residues alanine 567 to methionine 587 form a helical membrane-spanning segment. The Cytoplasmic portion of the chain corresponds to cysteine 588–lysine 1054. Desmoglein repeat repeat units lie at residues threonine 830–glutamate 856, serine 857–valine 886, glycine 887–isoleucine 916, alanine 917–isoleucine 944, and arginine 945–valine 973. A disordered region spans residues glycine 1018–alanine 1040. The span at serine 1029 to alanine 1040 shows a compositional bias: polar residues.

Binds to JUP/plakoglobin. Interacts with PKP2. Interacts with DSC3; there is evidence to suggest that the interaction promotes cell-cell adhesion of keratinocytes.

The protein resides in the cell membrane. The protein localises to the cell junction. Its subcellular location is the desmosome. It localises to the cytoplasm. It is found in the nucleus. Component of intercellular desmosome junctions. Involved in the interaction of plaque proteins and intermediate filaments mediating cell-cell adhesion. The chain is Desmoglein-1 (DSG1) from Canis lupus familiaris (Dog).